Here is a 721-residue protein sequence, read N- to C-terminus: Dipeptidyl-peptidase 7 (721 aa).

The signal sequence occupies residues methionine 1–alanine 21. Residues histidine 87, aspartate 228, and serine 656 each act as charge relay system in the active site.

Belongs to the peptidase S46 family.

Functionally, catalyzes the removal of dipeptides from the N-terminus of oligopeptides. Most potently cleaves the synthetic substrate Met-Leu-methylcoumaryl-7-amide (Met-Leu-MCA), followed by Leu-Arg-MCA, while this enzyme does not hydrolyze Gly-Arg-, Gly-Gly-, Lys-Lys-, or Gly-Pro-MCA. The sequence is that of Dipeptidyl-peptidase 7 (dpp7) from Phocaeicola vulgatus (strain ATCC 8482 / DSM 1447 / JCM 5826 / CCUG 4940 / NBRC 14291 / NCTC 11154) (Bacteroides vulgatus).